Reading from the N-terminus, the 101-residue chain is MAKQSMKAREVKRVALADKFFAKRAELKAIISDVNASDEDRWNAVLKLQSLPRDSSPSRQRNRCRQTGRPHAFLRKFGLSRIKVREAAMRGEIPGLKKASW.

It belongs to the universal ribosomal protein uS14 family. As to quaternary structure, part of the 30S ribosomal subunit. Contacts proteins S3 and S10.

Binds 16S rRNA, required for the assembly of 30S particles and may also be responsible for determining the conformation of the 16S rRNA at the A site. The protein is Small ribosomal subunit protein uS14 of Enterobacter sp. (strain 638).